Consider the following 318-residue polypeptide: Olfactory receptor-like protein COR1 (318 aa).

Residues 1–26 (MASGNCTTPTTFILSGLTDNPGLQMP) lie on the Extracellular side of the membrane. Asparagine 5 carries N-linked (GlcNAc...) asparagine glycosylation. The helical transmembrane segment at 27-49 (LFMVFLAIYTITLLTNLGLIALI) threads the bilayer. The Cytoplasmic portion of the chain corresponds to 50-57 (SVDLHLQT). A helical membrane pass occupies residues 58–79 (PMYIFLQNLSFTDAAYSTVITP). The Extracellular portion of the chain corresponds to 80–100 (KMLATFLEERKTISYVGCILQ). An intrachain disulfide couples cysteine 97 to cysteine 179. The helical transmembrane segment at 101-120 (YFSFVLLTVTESLLLAVMAY) threads the bilayer. Residues 121-139 (DRYVAICKPLLYPSIMTKA) lie on the Cytoplasmic side of the membrane. The helical transmembrane segment at 140–164 (VCWRLVESLYFLAFLNSLVHTSGLL) threads the bilayer. At 165–205 (KLSFCYSNVVNHFFCDISPLFQISSSSIAISELLVIISGSL) the chain is on the extracellular side. Residues 206–226 (FVMSSIIIILISYVFIILTVV) traverse the membrane as a helical segment. The Cytoplasmic portion of the chain corresponds to 227 to 239 (MIRSKDGKYKAFS). A helical transmembrane segment spans residues 240–260 (TCTSHLMAVSLFHGTVIFMYL). At 261 to 271 (RPVKLFSLDTD) the chain is on the extracellular side. A helical membrane pass occupies residues 272 to 292 (KIASLFYTVVIPMLNPLIYSW). The Cytoplasmic segment spans residues 293–318 (RNKEVKDALRRLTATTFGFIDSKAVQ).

It belongs to the G-protein coupled receptor 1 family.

Its subcellular location is the cell membrane. Its function is as follows. Odorant receptor. The sequence is that of Olfactory receptor-like protein COR1 (COR1) from Gallus gallus (Chicken).